The primary structure comprises 234 residues: Sugar fermentation stimulation protein A (234 aa).

A DNA-binding region (H-T-H motif) is located at residues 201-220; sequence LLSEAQQRGVEILAYKAEIS.

This sequence belongs to the SfsA family.

Its function is as follows. Binds to DNA non-specifically. Could be a regulatory factor involved in maltose metabolism. This Escherichia coli (strain 55989 / EAEC) protein is Sugar fermentation stimulation protein A.